The chain runs to 325 residues: Solute carrier family 35 member B1 (325 aa).

8 consecutive transmembrane segments (helical) span residues 18–38, 54–74, 88–108, 139–159, 171–191, 213–233, 246–266, and 288–308; these read PVCFLGVFACYFYYGILQESI, FALSLVFIQCVINAAFAKLLI, WLYAACSLSYLGAMVSSNSAL, YPLAKYLCVLLIVTGVALFMY, IFGYGELLLLLSLTLDGLTGV, LWSTLFLGAGILFTGELWEFL, ILLFGLTSALGQSFIFMTVVY, and VILFANPISTMQWVGTVLVFL. Positions 321–325 match the Di-lysine motif motif; that stretch reads KKTSH.

It belongs to the nucleotide-sugar transporter family. SLC35B subfamily.

The protein resides in the endoplasmic reticulum membrane. Functionally, probable sugar transporter. This Gallus gallus (Chicken) protein is Solute carrier family 35 member B1 (SLC35B1).